A 379-amino-acid polypeptide reads, in one-letter code: Succinyl-diaminopimelate desuccinylase (379 aa).

His70 provides a ligand contact to Zn(2+). The active site involves Asp72. Asp103 serves as a coordination point for Zn(2+). Catalysis depends on Glu137, which acts as the Proton acceptor. Zn(2+) contacts are provided by Glu138, Glu166, and His352.

It belongs to the peptidase M20A family. DapE subfamily. In terms of assembly, homodimer. The cofactor is Zn(2+). Co(2+) serves as cofactor.

It carries out the reaction N-succinyl-(2S,6S)-2,6-diaminopimelate + H2O = (2S,6S)-2,6-diaminopimelate + succinate. Its pathway is amino-acid biosynthesis; L-lysine biosynthesis via DAP pathway; LL-2,6-diaminopimelate from (S)-tetrahydrodipicolinate (succinylase route): step 3/3. In terms of biological role, catalyzes the hydrolysis of N-succinyl-L,L-diaminopimelic acid (SDAP), forming succinate and LL-2,6-diaminopimelate (DAP), an intermediate involved in the bacterial biosynthesis of lysine and meso-diaminopimelic acid, an essential component of bacterial cell walls. The chain is Succinyl-diaminopimelate desuccinylase from Burkholderia ambifaria (strain ATCC BAA-244 / DSM 16087 / CCUG 44356 / LMG 19182 / AMMD) (Burkholderia cepacia (strain AMMD)).